The primary structure comprises 411 residues: Phospholipase A1-II 6 (411 aa).

Catalysis depends on Ser226, which acts as the Acyl-ester intermediate. Residues Ser226, Asp296, and His334 each act as charge relay system in the active site.

Belongs to the AB hydrolase superfamily. Lipase family.

Its subcellular location is the cytoplasm. Acylhydrolase that catalyzes the hydrolysis of phospholipids at the sn-1 position. This chain is Phospholipase A1-II 6, found in Oryza sativa subsp. japonica (Rice).